Consider the following 105-residue polypeptide: Fluoride-specific ion channel FluC (105 aa).

3 helical membrane passes run 14–34, 44–64, and 79–99; these read FPLPILTVNVLGSFLMGVFVV, LSPLVMTGLLGGFTTFSAFSL, and ALYVALSVGLSIAGLMAGLWL. 2 residues coordinate Na(+): Gly54 and Thr57.

The protein belongs to the fluoride channel Fluc/FEX (TC 1.A.43) family.

It is found in the cell inner membrane. The enzyme catalyses fluoride(in) = fluoride(out). With respect to regulation, na(+) is not transported, but it plays an essential structural role and its presence is essential for fluoride channel function. Functionally, fluoride-specific ion channel. Important for reducing fluoride concentration in the cell, thus reducing its toxicity. This Jannaschia sp. (strain CCS1) protein is Fluoride-specific ion channel FluC.